A 212-amino-acid chain; its full sequence is Thymidylate kinase (212 aa).

10 to 17 (GIDGCGKT) is a binding site for ATP.

The protein belongs to the thymidylate kinase family.

The catalysed reaction is dTMP + ATP = dTDP + ADP. In terms of biological role, phosphorylation of dTMP to form dTDP in both de novo and salvage pathways of dTTP synthesis. This chain is Thymidylate kinase, found in Prochlorococcus marinus (strain MIT 9312).